The following is a 239-amino-acid chain: Phosphothreonine lyase OspF (239 aa).

The active-site Proton donor is the His-104. Lys-134 serves as the catalytic Proton acceptor.

The protein belongs to the phosphothreonine lyase family.

It localises to the secreted. Functionally, catalyzes the removal of the phosphate group from the phosphothreonine in the mitogen-activated protein kinases such as MAPK2/ERK2, MAPK3/ERK1, MAPK8 and MAPK14 in an irreversible reaction, thus preventing the downstream phosphorylation of histone H3. This epigenetic modification results in inhibition of the transcription of a specific subset of pro-inflammatory genes, and ultimately to a reduced immune response against the invading pathogen. The diminished immune response enhances the bacterium's ability to disseminate and multiply within the host. This is Phosphothreonine lyase OspF (ospF) from Shigella dysenteriae serotype 1 (strain Sd197).